The following is a 581-amino-acid chain: NADH-quinone oxidoreductase subunit C/D (581 aa).

The tract at residues 1–172 is NADH dehydrogenase I subunit C; that stretch reads MSGAELISDL…PPFVMTAARF (172 aa). Residues 196–581 are NADH dehydrogenase I subunit D; it reads ELMILNYGPH…IDYVMSDVDR (386 aa).

The protein in the N-terminal section; belongs to the complex I 30 kDa subunit family. In the C-terminal section; belongs to the complex I 49 kDa subunit family. In terms of assembly, NDH-1 is composed of 13 different subunits. Subunits NuoB, CD, E, F, and G constitute the peripheral sector of the complex.

The protein localises to the cell inner membrane. It carries out the reaction a quinone + NADH + 5 H(+)(in) = a quinol + NAD(+) + 4 H(+)(out). NDH-1 shuttles electrons from NADH, via FMN and iron-sulfur (Fe-S) centers, to quinones in the respiratory chain. The immediate electron acceptor for the enzyme in this species is believed to be ubiquinone. Couples the redox reaction to proton translocation (for every two electrons transferred, four hydrogen ions are translocated across the cytoplasmic membrane), and thus conserves the redox energy in a proton gradient. The protein is NADH-quinone oxidoreductase subunit C/D of Rhodopseudomonas palustris (strain BisA53).